We begin with the raw amino-acid sequence, 170 residues long: ATP synthase subunit b (170 aa).

A helical transmembrane segment spans residues 3–23; the sequence is IKILFFLALPFLAYASEHGGT.

The protein belongs to the ATPase B chain family. As to quaternary structure, F-type ATPases have 2 components, F(1) - the catalytic core - and F(0) - the membrane proton channel. F(1) has five subunits: alpha(3), beta(3), gamma(1), delta(1), epsilon(1). F(0) has three main subunits: a(1), b(2) and c(10-14). The alpha and beta chains form an alternating ring which encloses part of the gamma chain. F(1) is attached to F(0) by a central stalk formed by the gamma and epsilon chains, while a peripheral stalk is formed by the delta and b chains.

The protein localises to the cell inner membrane. In terms of biological role, f(1)F(0) ATP synthase produces ATP from ADP in the presence of a proton or sodium gradient. F-type ATPases consist of two structural domains, F(1) containing the extramembraneous catalytic core and F(0) containing the membrane proton channel, linked together by a central stalk and a peripheral stalk. During catalysis, ATP synthesis in the catalytic domain of F(1) is coupled via a rotary mechanism of the central stalk subunits to proton translocation. Functionally, component of the F(0) channel, it forms part of the peripheral stalk, linking F(1) to F(0). The sequence is that of ATP synthase subunit b from Campylobacter concisus (strain 13826).